The sequence spans 408 residues: Multidrug resistance protein MdtG (408 aa).

11 consecutive transmembrane segments (helical) span residues Leu16–Phe36, Ile58–Ala78, Leu92–Ile112, Ala115–Val135, Thr146–Ala166, Pro173–Ile193, Leu224–Leu244, Val256–Pro276, Ile290–Thr310, Phe319–Asn339, and Ala378–Leu398.

This sequence belongs to the major facilitator superfamily. DHA1 family. MdtG (TC 2.A.1.2.20) subfamily.

The protein resides in the cell inner membrane. In terms of biological role, confers resistance to fosfomycin and deoxycholate. The protein is Multidrug resistance protein MdtG of Escherichia coli O7:K1 (strain IAI39 / ExPEC).